Consider the following 309-residue polypeptide: Homoserine O-acetyltransferase (309 aa).

Cys-142 functions as the Acyl-thioester intermediate in the catalytic mechanism. Substrate contacts are provided by Lys-163 and Ser-192. Residue His-235 is the Proton acceptor of the active site. Glu-237 is a catalytic residue. Arg-249 contacts substrate.

The protein belongs to the MetA family.

It is found in the cytoplasm. The enzyme catalyses L-homoserine + acetyl-CoA = O-acetyl-L-homoserine + CoA. It participates in amino-acid biosynthesis; L-methionine biosynthesis via de novo pathway; O-acetyl-L-homoserine from L-homoserine: step 1/1. Transfers an acetyl group from acetyl-CoA to L-homoserine, forming acetyl-L-homoserine. This is Homoserine O-acetyltransferase from Allorhizobium ampelinum (strain ATCC BAA-846 / DSM 112012 / S4) (Agrobacterium vitis (strain S4)).